The primary structure comprises 77 residues: uncharacterized protein (77 aa).

This is an uncharacterized protein from Vaccinia virus (strain Western Reserve) (VACV).